The sequence spans 46 residues: Photosystem II reaction center protein K (46 aa).

Residues 1–9 constitute a propeptide that is removed on maturation; that stretch reads MTTLALVLA. A helical transmembrane segment spans residues 18-38; the sequence is FAPIVDVLPVIPVFFILLAFV.

Belongs to the PsbK family. In terms of assembly, PSII is composed of 1 copy each of membrane proteins PsbA, PsbB, PsbC, PsbD, PsbE, PsbF, PsbH, PsbI, PsbJ, PsbK, PsbL, PsbM, PsbT, PsbX, PsbY, PsbZ, Psb30/Ycf12, at least 3 peripheral proteins of the oxygen-evolving complex and a large number of cofactors. It forms dimeric complexes. This protein is tightly associated with CP43 (psbC), one of the core proteins.

Its subcellular location is the plastid. It localises to the chloroplast thylakoid membrane. In terms of biological role, one of the components of the core complex of photosystem II (PSII). PSII is a light-driven water:plastoquinone oxidoreductase that uses light energy to abstract electrons from H(2)O, generating O(2) and a proton gradient subsequently used for ATP formation. It consists of a core antenna complex that captures photons, and an electron transfer chain that converts photonic excitation into a charge separation. Required for assembly and/or stability of PSII. This is Photosystem II reaction center protein K from Chlamydomonas reinhardtii (Chlamydomonas smithii).